Here is a 476-residue protein sequence, read N- to C-terminus: Ribulose bisphosphate carboxylase large chain (476 aa).

A propeptide spanning residues 1–2 is cleaved from the precursor; sequence MS. Pro-3 is modified (N-acetylproline). An N6,N6,N6-trimethyllysine modification is found at Lys-14. Residues Asn-123 and Thr-173 each coordinate substrate. Lys-175 (proton acceptor) is an active-site residue. Residue Lys-177 participates in substrate binding. 3 residues coordinate Mg(2+): Lys-201, Asp-203, and Glu-204. Lys-201 carries the post-translational modification N6-carboxylysine. Arg-295, His-327, and Ser-379 together coordinate substrate.

Belongs to the RuBisCO large chain family. Type I subfamily. Heterohexadecamer of 8 large chains and 8 small chains; disulfide-linked. The disulfide link is formed within the large subunit homodimers. Mg(2+) is required as a cofactor. In terms of processing, the disulfide bond which can form in the large chain dimeric partners within the hexadecamer appears to be associated with oxidative stress and protein turnover.

The protein resides in the plastid. The protein localises to the chloroplast. It catalyses the reaction 2 (2R)-3-phosphoglycerate + 2 H(+) = D-ribulose 1,5-bisphosphate + CO2 + H2O. The enzyme catalyses D-ribulose 1,5-bisphosphate + O2 = 2-phosphoglycolate + (2R)-3-phosphoglycerate + 2 H(+). In terms of biological role, ruBisCO catalyzes two reactions: the carboxylation of D-ribulose 1,5-bisphosphate, the primary event in carbon dioxide fixation, as well as the oxidative fragmentation of the pentose substrate in the photorespiration process. Both reactions occur simultaneously and in competition at the same active site. The polypeptide is Ribulose bisphosphate carboxylase large chain (Barnadesia caryophylla (Xenophontia caryophylla)).